Reading from the N-terminus, the 518-residue chain is Protein nucleotidyltransferase YdiU (518 aa).

Positions 1–10 are enriched in basic and acidic residues; the sequence is MTHLRFDNRL. Residues 1 to 23 form a disordered region; it reads MTHLRFDNRLRQQLPGDPEEGSR. ATP is bound by residues glycine 100, glycine 102, arginine 103, lysine 123, aspartate 135, glycine 136, arginine 193, and arginine 200. Aspartate 270 functions as the Proton acceptor in the catalytic mechanism. Mg(2+)-binding residues include asparagine 271 and aspartate 280. Aspartate 280 is an ATP binding site.

Belongs to the SELO family. Mg(2+) is required as a cofactor. The cofactor is Mn(2+).

It carries out the reaction L-seryl-[protein] + ATP = 3-O-(5'-adenylyl)-L-seryl-[protein] + diphosphate. The catalysed reaction is L-threonyl-[protein] + ATP = 3-O-(5'-adenylyl)-L-threonyl-[protein] + diphosphate. The enzyme catalyses L-tyrosyl-[protein] + ATP = O-(5'-adenylyl)-L-tyrosyl-[protein] + diphosphate. It catalyses the reaction L-histidyl-[protein] + UTP = N(tele)-(5'-uridylyl)-L-histidyl-[protein] + diphosphate. It carries out the reaction L-seryl-[protein] + UTP = O-(5'-uridylyl)-L-seryl-[protein] + diphosphate. The catalysed reaction is L-tyrosyl-[protein] + UTP = O-(5'-uridylyl)-L-tyrosyl-[protein] + diphosphate. Functionally, nucleotidyltransferase involved in the post-translational modification of proteins. It can catalyze the addition of adenosine monophosphate (AMP) or uridine monophosphate (UMP) to a protein, resulting in modifications known as AMPylation and UMPylation. The sequence is that of Protein nucleotidyltransferase YdiU from Xanthomonas axonopodis pv. citri (strain 306).